The chain runs to 485 residues: MATLEDSFLADLDELSDNEAELDENDGDVGKEEEDVDMDMADLETLNYDDLDNVSKLQKSQRYADIMHKVEEALGKDSDGAEKGTVLEDDPEYKLIVDCNQLSVDIENEIVIVHNFIKDKYKLKFQELESLVHHPIDYACVVKKIGNETDLALVDLADLLPSAIIMVVSVTALTTKGSALPEDVLQKVLEACDRALDLDSARKKVLEFVESKMGSIAPNLSAIVGSAVAAKLMGTAGGLSALAKMPACNVQVLGHKRKNLAGFSSATSQSRVGYLEQTEIYQSTPPGLQARAGRLVAAKSTLAARVDATRGDPLGISGKAFREEIRKKIEKWQEPPPARQPKPLPVPDSEPKKRRGGRRLRKMKERYQVTDMRKLANRMAFGTPEESSLGDGLGEGYGMLGQAGSNRLRVSSVPSKLKINAKVAKKLKERQYAGGATTSGLTSSLAFTPVQGIELCNPQQALGLGSGTQSTYFSESGTFSKLKKI.

Disordered stretches follow at residues 1-36 and 329-361; these read MATL…EEDV and IEKW…RRLR. The span at 11 to 36 shows a compositional bias: acidic residues; it reads DLDELSDNEAELDENDGDVGKEEEDV. In terms of domain architecture, Nop spans 216 to 334; sequence IAPNLSAIVG…IRKKIEKWQE (119 aa). Residues 334 to 348 show a composition bias toward pro residues; the sequence is EPPPARQPKPLPVPD. A compositionally biased stretch (basic residues) spans 352 to 361; that stretch reads KKRRGGRRLR. The Nuclear localization signal motif lies at 352–365; the sequence is KKRRGGRRLRKMKE.

The protein belongs to the PRP31 family. Component of the U4/U6-U5 tri-snRNP complex composed of the U4, U6 and U5 snRNAs and pre-mRNA-splicing factors. Interacts with STA1 and SOP1.

Its subcellular location is the nucleus. It is found in the cajal body. Its function is as follows. Involved in pre-mRNA splicing. Required for the assembly of the U4/U5/U6 tri-snRNP complex, one of the building blocks of the spliceosome. Functions in association with STA1 and ZOP1 in spliceosome dynamics and pre-mRNA splicing. Required for transcriptional regulation and pre-mRNA splicing of cold-responsive genes, such as LTI78/RD29A, KIN2/COR6.6 or COR15A, especially under cold stress. May play a role in stress response. Involved in transcriptional gene silencing of endogenous transposable elements, independently of the RNA-directed DNA methylation (RdDM) pathway. Seems not to participate in the small RNA biogenesis of the RdDM pathway. The chain is U4/U6 small nuclear ribonucleoprotein Prp31 homolog from Arabidopsis thaliana (Mouse-ear cress).